Here is a 122-residue protein sequence, read N- to C-terminus: MADRIGKPVSQRQLRVGEMIRQSLGMIFARNEAKVPNLETNTITVTEVKMSQDLKIAKAYVLPLGGKDSELVIKKLKECSFLIRKALSKKIIMKYLPKILFAKDDSFEYAEKIENLIKQTNK.

It belongs to the RbfA family. As to quaternary structure, monomer. Binds 30S ribosomal subunits, but not 50S ribosomal subunits or 70S ribosomes.

It localises to the cytoplasm. One of several proteins that assist in the late maturation steps of the functional core of the 30S ribosomal subunit. Associates with free 30S ribosomal subunits (but not with 30S subunits that are part of 70S ribosomes or polysomes). Required for efficient processing of 16S rRNA. May interact with the 5'-terminal helix region of 16S rRNA. The sequence is that of Ribosome-binding factor A from Pelagibacter ubique (strain HTCC1062).